Consider the following 405-residue polypeptide: MKFVDEVSIFVKAGDGGNGMMSFRREKFIEKGGPNGGDGGDGGSVYLEADENLNTLVDYRYTRRFQAQNGQKGGSTDCTGAKGEDLILPVPVGTTVIDAATQEIMGDLTKAGQRLLVAQGGWHGLGNTRFKSSTNRAPRQTTPGKPGDARDLKLELKVLADVGLLGLPNAGKSTFIRSVSAAKPKVADYPFTTLVPNLGVVSVGRYKSFVIADIPGLIEGASEGAGLGIRFLKHLARTRLLLHLVDMAPLDGSDPADAAEVILHELEKFSPALTQRDRWLVLNKADQLLEEEREERVRHVVERLDWKGPVFVISALESEGTEALSQAIMRYLDERAVRIAEEPEYAEALAELDRQIEDEARARLQELDDQRALRRAGVKSVEEADDDDFDDDDDDEGGAEIIYVR.

The 159-residue stretch at 1 to 159 (MKFVDEVSIF…RDLKLELKVL (159 aa)) folds into the Obg domain. The interval 127–148 (NTRFKSSTNRAPRQTTPGKPGD) is disordered. Residues 129 to 143 (RFKSSTNRAPRQTTP) show a composition bias toward polar residues. Positions 160–333 (ADVGLLGLPN…LSQAIMRYLD (174 aa)) constitute an OBG-type G domain. Residues 166-173 (GLPNAGKS), 191-195 (FTTLV), 213-216 (DIPG), 283-286 (NKAD), and 314-316 (SAL) each bind GTP. Residues S173 and T193 each contribute to the Mg(2+) site. Positions 373–405 (LRRAGVKSVEEADDDDFDDDDDDEGGAEIIYVR) are disordered. The segment covering 383–398 (EADDDDFDDDDDDEGG) has biased composition (acidic residues).

It belongs to the TRAFAC class OBG-HflX-like GTPase superfamily. OBG GTPase family. Monomer. Mg(2+) is required as a cofactor.

It localises to the cytoplasm. Its function is as follows. An essential GTPase which binds GTP, GDP and possibly (p)ppGpp with moderate affinity, with high nucleotide exchange rates and a fairly low GTP hydrolysis rate. Plays a role in control of the cell cycle, stress response, ribosome biogenesis and in those bacteria that undergo differentiation, in morphogenesis control. The polypeptide is GTPase Obg (Stutzerimonas stutzeri (strain A1501) (Pseudomonas stutzeri)).